The chain runs to 84 residues: MVVIRLARGGSKKRPFFNIVATDSRNRRDGRFIERVGFYNPLAGEGEEGLRIVQDRLTYWEGVGAQLSPTVARLVKQGAKKAAA.

This sequence belongs to the bacterial ribosomal protein bS16 family.

The polypeptide is Small ribosomal subunit protein bS16 (Ralstonia pickettii (strain 12J)).